Consider the following 52-residue polypeptide: MQLNLGAIFLALLGVMATATSVLAEPHRHQGPIFDTRPSPFNPNQPRPGPIY.

Residues 1-24 (MQLNLGAIFLALLGVMATATSVLA) form the signal peptide. Positions 25–26 (EP) are excised as a propeptide. Residues 28 to 52 (RHQGPIFDTRPSPFNPNQPRPGPIY) form a disordered region. The segment covering 40 to 52 (PFNPNQPRPGPIY) has biased composition (pro residues).

In terms of tissue distribution, hemolymph (at protein level). Highest expression in fat body.

It is found in the secreted. Potent antifungal and antibacterial activity against Gram-positive bacteria. In Drosophila melanogaster (Fruit fly), this protein is Metchnikowin (Mtk).